Reading from the N-terminus, the 464-residue chain is MSTPTLPNLSQLHGIQNQSLQQQQQQQPQQQQQPQQQQQQQQPQQTMQQPIQNLHQQAPQMQQPQYNLHTTLPPPLMNPNGLGLMGHNMMGGGNNGNNSGNNNGQPQMHGTNLNGLSLAIQNQSSLPQPINNNNNNNNNNSNINNNNNNSNNNNNNNNSNLGINSSPTQSSANSADKRSRGRPRKNPPSEPKDTSGPKRKRGRPPKMDEEGNPQPKPVPQPGSNKKRGRPKKPKDENESDYNNTSFSDSNTDGTPKKRGRPPKAKGDSPSASPTHNTLGNGILNSNNNNNNNNNNSNINNINNNNNNNSNNNNNSSNNNNNNNNSTNNNTNNNNNNTNNNTNNNNNNINNNNNNTNNNNNNANNQNTNNNNMGNNSNNNNNPNNNNHQNNNNNNTSNNSNTTTATTTAPGGNNLTNSLNNAGNLGNLGRVSGLHSSDPNNPNAQKSFPDSTNTMDFQPNFSFFH.

A compositionally biased stretch (polar residues) spans 1–15 (MSTPTLPNLSQLHGI). Disordered regions lie at residues 1-112 (MSTP…HGTN) and 125-464 (SLPQ…SFFH). Low complexity-rich tracts occupy residues 16-65 (QNQS…QQPQ), 78-88 (NPNGLGLMGHN), and 130-160 (INNN…NNSN). Positions 161-174 (LGINSSPTQSSANS) are enriched in polar residues. DNA-binding regions (a.T hook) lie at residues 177 to 189 (KRSR…NPPS), 198 to 210 (KRKR…MDEE), and 224 to 236 (NKKR…PKDE). Residues 240 to 253 (DYNNTSFSDSNTDG) are compositionally biased toward polar residues. The segment at residues 255-267 (PKKRGRPPKAKGD) is a DNA-binding region (a.T hook 4). Positions 276–428 (NTLGNGILNS…NNAGNLGNLG (153 aa)) are enriched in low complexity. Positions 433–464 (LHSSDPNNPNAQKSFPDSTNTMDFQPNFSFFH) are enriched in polar residues.

The sequence is that of AAC-rich mRNA clone AAC11 protein (AAC11) from Dictyostelium discoideum (Social amoeba).